The chain runs to 367 residues: tRNA-specific 2-thiouridylase MnmA (367 aa).

Residues 6 to 13 (AMSGGVDS) and methionine 32 each bind ATP. Cysteine 101 serves as the catalytic Nucleophile. Residues cysteine 101 and cysteine 193 are joined by a disulfide bond. Glycine 125 provides a ligand contact to ATP. The segment at 143 to 145 (KDQ) is interaction with tRNA. The active-site Cysteine persulfide intermediate is cysteine 193.

The protein belongs to the MnmA/TRMU family.

It is found in the cytoplasm. The catalysed reaction is S-sulfanyl-L-cysteinyl-[protein] + uridine(34) in tRNA + AH2 + ATP = 2-thiouridine(34) in tRNA + L-cysteinyl-[protein] + A + AMP + diphosphate + H(+). Catalyzes the 2-thiolation of uridine at the wobble position (U34) of tRNA, leading to the formation of s(2)U34. The chain is tRNA-specific 2-thiouridylase MnmA from Mycobacterium tuberculosis (strain CDC 1551 / Oshkosh).